Here is a 500-residue protein sequence, read N- to C-terminus: MTIFDNYEVWFVIGSQHLYGPETLRQVTQHAEHVVNALNTEAKLPCKLVLKPLGTTPDEITAICRDANYDDRCAGLVVWLHTFSPAKMWINGLTMLNKPLLQFHTQFNAALPWDSIDMDFMNLNQTAHGGREFGFIGARMRQQHAVVTGHWQDKQAHERIGSWMRQAVSKQDTRHLKVCRFGDNMREVAVTDGDKVAAQIKFGFSVNTWAVGDLVQVVNSISDGDVNALVDEYESCYTMTPATQIHGEKRQNVLEAARIELGMKRFLEQGGFHAFTTTFEDLHGLKQLPGLAVQRLMQQGYGFAGEGDWKTAALLRIMKVMSTGLQGGTSFMEDYTYHFEKGNDLVLGSHMLEVCPSIAVEEKPILDVQHLGIGGKDDPARLIFNTQTGPAIVASLIDLGDRYRLLVNCIDTVKTPHSLPKLPVANALWKAQPDLPTASEAWILAGGAHHTVFSHALNLNDMRQFAEMHDIEITVIDNDTRLPAFKDALRWNEVYYGFRR.

Glu306, Glu333, His350, and His450 together coordinate Mn(2+).

The protein belongs to the arabinose isomerase family. Homohexamer. It depends on Mn(2+) as a cofactor.

The enzyme catalyses beta-L-arabinopyranose = L-ribulose. It functions in the pathway carbohydrate degradation; L-arabinose degradation via L-ribulose; D-xylulose 5-phosphate from L-arabinose (bacterial route): step 1/3. Functionally, catalyzes the conversion of L-arabinose to L-ribulose. In Escherichia coli O139:H28 (strain E24377A / ETEC), this protein is L-arabinose isomerase.